The sequence spans 296 residues: Elongation factor Ts (296 aa).

The tract at residues 82–85 (TDFV) is involved in Mg(2+) ion dislocation from EF-Tu.

This sequence belongs to the EF-Ts family.

It localises to the cytoplasm. Associates with the EF-Tu.GDP complex and induces the exchange of GDP to GTP. It remains bound to the aminoacyl-tRNA.EF-Tu.GTP complex up to the GTP hydrolysis stage on the ribosome. The sequence is that of Elongation factor Ts from Coxiella burnetii (strain CbuK_Q154) (Coxiella burnetii (strain Q154)).